The following is a 143-amino-acid chain: Ribonuclease H (143 aa).

Positions 1–136 (MQEIEIFCDG…CDSLAKLEAQ (136 aa)) constitute an RNase H type-1 domain. Residues aspartate 9, glutamate 47, aspartate 69, and aspartate 128 each contribute to the Mg(2+) site.

This sequence belongs to the RNase H family. As to quaternary structure, monomer. Mg(2+) serves as cofactor.

Its subcellular location is the cytoplasm. The enzyme catalyses Endonucleolytic cleavage to 5'-phosphomonoester.. In terms of biological role, endonuclease that specifically degrades the RNA of RNA-DNA hybrids. This Helicobacter acinonychis (strain Sheeba) protein is Ribonuclease H.